The primary structure comprises 72 residues: Translation initiation factor IF-1 (72 aa).

Residues 1 to 72 enclose the S1-like domain; it reads MAKSDVIEVE…SKGRITYRFK (72 aa).

It belongs to the IF-1 family. As to quaternary structure, component of the 30S ribosomal translation pre-initiation complex which assembles on the 30S ribosome in the order IF-2 and IF-3, IF-1 and N-formylmethionyl-tRNA(fMet); mRNA recruitment can occur at any time during PIC assembly.

The protein localises to the cytoplasm. Its function is as follows. One of the essential components for the initiation of protein synthesis. Stabilizes the binding of IF-2 and IF-3 on the 30S subunit to which N-formylmethionyl-tRNA(fMet) subsequently binds. Helps modulate mRNA selection, yielding the 30S pre-initiation complex (PIC). Upon addition of the 50S ribosomal subunit IF-1, IF-2 and IF-3 are released leaving the mature 70S translation initiation complex. This is Translation initiation factor IF-1 from Levilactobacillus brevis (strain ATCC 367 / BCRC 12310 / CIP 105137 / JCM 1170 / LMG 11437 / NCIMB 947 / NCTC 947) (Lactobacillus brevis).